We begin with the raw amino-acid sequence, 478 residues long: MSATDPRPARTLFEKVWDAHVVRAETPETPAVLYIDLHLMHEVTSPQAFSMLRERGLKVRRPDRTLATTDHSTPTLPRLPDGRWPFFDAQNEAQVAQIEKNARDFGVELHGLGDPQQGVVHVFGPEMGATQPGMTVVCGDSHTATHGAFGALAFGIGTSEVGHVLATQCLLQRKPRSLAIRVDGALQPGVTAKDLILAIIAQIGVGGGTGHVMEFTGPAVRALTMEGRMTLCNMAIEGGARAGMIAPDDVTFQWLAGKPRVPQGAAFDAAVARWRELPTDAGARYDREVTVDVSRLEPMVTFGTNPAQGIPVTGRIPDPGAEKDPSARATLESALRYMALAPGKPILGQKVDVVFVGSCTNGRLEDLREAARVMRGRKVKTRTLVVAGSHAVKKAAEAEGLDRIFREAGAEWREPGCSMCLAMNGDMLEPGQYCVSTSNRNFEGRQGPGGRTLLASPATAAAAAVSGAVADPRRLVEG.

Residues cysteine 359, cysteine 417, and cysteine 420 each coordinate [4Fe-4S] cluster.

It belongs to the aconitase/IPM isomerase family. LeuC type 1 subfamily. As to quaternary structure, heterodimer of LeuC and LeuD. [4Fe-4S] cluster is required as a cofactor.

It catalyses the reaction (2R,3S)-3-isopropylmalate = (2S)-2-isopropylmalate. The protein operates within amino-acid biosynthesis; L-leucine biosynthesis; L-leucine from 3-methyl-2-oxobutanoate: step 2/4. Catalyzes the isomerization between 2-isopropylmalate and 3-isopropylmalate, via the formation of 2-isopropylmaleate. The sequence is that of 3-isopropylmalate dehydratase large subunit from Anaeromyxobacter sp. (strain Fw109-5).